The primary structure comprises 438 residues: Enolase (438 aa).

Substrate is bound by residues His159 and Glu168. Glu211 serves as the catalytic Proton donor. Asp246, Glu297, and Asp322 together coordinate Mg(2+). Residues Glu297 and Asp322 each contribute to the substrate site. Lys347 functions as the Proton acceptor in the catalytic mechanism. Substrate is bound by residues 374–377 (SHRS) and Lys398.

The protein belongs to the enolase family. As to quaternary structure, homodimer. Requires Mg(2+) as cofactor.

It is found in the cytoplasm. It carries out the reaction (2R)-2-phosphoglycerate = phosphoenolpyruvate + H2O. It functions in the pathway carbohydrate degradation; glycolysis; pyruvate from D-glyceraldehyde 3-phosphate: step 4/5. The protein is Enolase (ENO1) of Cryphonectria parasitica (Chestnut blight fungus).